A 258-amino-acid chain; its full sequence is Aspartate/glutamate leucyltransferase (258 aa).

The protein belongs to the R-transferase family. Bpt subfamily.

Its subcellular location is the cytoplasm. It carries out the reaction N-terminal L-glutamyl-[protein] + L-leucyl-tRNA(Leu) = N-terminal L-leucyl-L-glutamyl-[protein] + tRNA(Leu) + H(+). The enzyme catalyses N-terminal L-aspartyl-[protein] + L-leucyl-tRNA(Leu) = N-terminal L-leucyl-L-aspartyl-[protein] + tRNA(Leu) + H(+). Functionally, functions in the N-end rule pathway of protein degradation where it conjugates Leu from its aminoacyl-tRNA to the N-termini of proteins containing an N-terminal aspartate or glutamate. The sequence is that of Aspartate/glutamate leucyltransferase from Rhizobium leguminosarum bv. trifolii (strain WSM2304).